Here is a 503-residue protein sequence, read N- to C-terminus: Variant surface glycoprotein ILTAT 1.3 (503 aa).

The first 29 residues, 1-29, serve as a signal peptide directing secretion; sequence MTKAYENRMLLQALVLAAVLCTTHAEGTA. Intrachain disulfides connect Cys42–Cys168 and Cys150–Cys206. Residues Asn419 and Asn432 are each glycosylated (N-linked (GlcNAc...) asparagine). The GPI-anchor amidated aspartate moiety is linked to residue Asp480. A propeptide spans 481-503 (removed in mature form); sequence SSFILNKQFALSVVSAAFAALLF.

The protein localises to the cell membrane. In terms of biological role, VSG forms a coat on the surface of the parasite. The trypanosome evades the immune response of the host by expressing a series of antigenically distinct VSGs from an estimated 1000 VSG genes. This chain is Variant surface glycoprotein ILTAT 1.3, found in Trypanosoma brucei brucei.